The following is a 202-amino-acid chain: MSDFIVGLTGGIASGKSALAAEFEKLGVPVVDADLVARQVVAPGPVLDAIVAQFGAEVLLTDGTLDRQTLRQRVFADTAQRRVLEAITHPAIRSELQRAALAALAPYAIVAIPLLTEAGGRAGYPWLDRILVVDVPVALQHQRLMQRDAATAELADRMIAAQATREQRLAIADDVVCNDGVLEQLTQATHRLDADYRARSDR.

The 198-residue stretch at 5–202 (IVGLTGGIAS…DADYRARSDR (198 aa)) folds into the DPCK domain. 13 to 18 (ASGKSA) is an ATP binding site.

This sequence belongs to the CoaE family.

Its subcellular location is the cytoplasm. The catalysed reaction is 3'-dephospho-CoA + ATP = ADP + CoA + H(+). Its pathway is cofactor biosynthesis; coenzyme A biosynthesis; CoA from (R)-pantothenate: step 5/5. Its function is as follows. Catalyzes the phosphorylation of the 3'-hydroxyl group of dephosphocoenzyme A to form coenzyme A. This is Dephospho-CoA kinase from Xanthomonas oryzae pv. oryzae (strain MAFF 311018).